Consider the following 526-residue polypeptide: Dual specificity tyrosine-phosphorylation-regulated kinase 2 (526 aa).

Polar residues-rich tracts occupy residues 30–40 and 60–70; these read TTQPNGLTTLG and GSSSSLKSTDG. The segment at 30-76 is disordered; the sequence is TTQPNGLTTLGKSGLPVVQDRQSESAHRRQGSSSSLKSTDGTGKVKA. Residue T31 is modified to Phosphothreonine; by ATM. The short motif at 114 to 116 is the Nuclear localization signal element; it reads KKR. Positions 147-460 constitute a Protein kinase domain; sequence YEVLKVIGKG…PSQALRHPWL (314 aa). Residues 153-161, K176, and 226-229 contribute to the ATP site; these read IGKGSFGQV and FELL. Catalysis depends on D273, which acts as the Proton acceptor. Y307 is subject to Phosphotyrosine. S367 is subject to Phosphoserine; by ATM. The disordered stretch occupies residues 462 to 499; the sequence is RRLPKPPTGEKASAKRITESTGAITSISKLPPTSSSAS. A compositionally biased stretch (polar residues) spans 480–499; sequence ESTGAITSISKLPPTSSSAS.

It belongs to the protein kinase superfamily. CMGC Ser/Thr protein kinase family. MNB/DYRK subfamily. Interacts with MDM2. Mg(2+) serves as cofactor. Requires Mn(2+) as cofactor. Phosphorylated on serine/threonine residues. Phosphorylation on Thr-31 and Ser-367 by ATM in response to genotoxic stress disrupts MDM2 binding and prevents MDM2-mediated ubiquitination and subsequent proteasome degradation, thus promoting p53/TP53-mediated apoptosis. In terms of processing, ubiquitination in nucleus by MDM2 in normal conditions leads to proteasome degradation.

The protein resides in the cytoplasm. It localises to the nucleus. It carries out the reaction L-seryl-[protein] + ATP = O-phospho-L-seryl-[protein] + ADP + H(+). The catalysed reaction is L-threonyl-[protein] + ATP = O-phospho-L-threonyl-[protein] + ADP + H(+). It catalyses the reaction L-tyrosyl-[protein] + ATP = O-phospho-L-tyrosyl-[protein] + ADP + H(+). With respect to regulation, autophosphorylates on tyrosine residues. Functionally, serine/threonine-protein kinase involved in the control of mitotic transition and the regulation of cellular growth and/or development. This chain is Dual specificity tyrosine-phosphorylation-regulated kinase 2, found in Gallus gallus (Chicken).